We begin with the raw amino-acid sequence, 867 residues long: Cadherin-related family member 1 (867 aa).

An N-terminal signal peptide occupies residues 1–21 (MGRGPPAVLAPWMLFLSLAQA). Topologically, residues 22–701 (NFAPHFFDNG…LMQTKDNPMK (680 aa)) are extracellular. 6 consecutive Cadherin domains span residues 36–135 (NGNM…APRF), 136–247 (IQEP…GPVF), 248–354 (VGTP…PPTF), 360–473 (PQNR…VPKF), 474–577 (TSHY…YPQF), and 574–689 (YPQF…SPMA). N-linked (GlcNAc...) asparagine glycosylation is found at N58 and N89. Residues N288 and N297 are each glycosylated (N-linked (GlcNAc...) asparagine). Residues 702-722 (AVGVLAGIMAIIVAITVLIST) traverse the membrane as a helical segment. Over 723-867 (ATFWRNKKSN…KKNLHSKAYF (145 aa)) the chain is Cytoplasmic. Positions 767-843 (KFVLREAPPN…VAKRKAVGSP (77 aa)) are disordered. A compositionally biased stretch (polar residues) spans 777–786 (ENCNNNSRGS). Positions 790-802 (PQAPAPPPPPSPA) are enriched in pro residues.

As to quaternary structure, interacts with PROM1. In terms of processing, undergoes proteolytic cleavage; produces a soluble 95 kDa N-terminal fragment and a 25 kDa cell-associated C-terminal fragment. In terms of tissue distribution, expressed in photoreceptor cells of the outer nuclear layer of the retina.

It localises to the cell membrane. Potential calcium-dependent cell-adhesion protein. May be required for the structural integrity of the outer segment (OS) of photoreceptor cells. The chain is Cadherin-related family member 1 (CDHR1) from Bos taurus (Bovine).